Here is a 515-residue protein sequence, read N- to C-terminus: Signal transduction histidine-protein kinase/phosphatase MprB (515 aa).

Residues 1–24 are Cytoplasmic-facing; sequence MTLPPPPSRLKPPRNTSSLSLRWR. Residues 25-45 form a helical membrane-spanning segment; it reads VMLLAMSMVAMVVVLMSVAVY. Over 46–165 the chain is Extracellular; it reads AVVSRALYDD…TGQVLGRLGT (120 aa). The helical transmembrane segment at 166–186 threads the bilayer; that stretch reads VLLIVGGVGVAVAAIAGGMVA. An HAMP domain is found at 187–239; sequence RAGLRPVGRLTQAAERVARTDDLRPIPVFGSDELARLTEAFNMMLRALTESRE. The Cytoplasmic portion of the chain corresponds to 187–515; the sequence is RAGLRPVGRL…GKSRSASKEL (329 aa). The Histidine kinase domain maps to 247–467; sequence DAGHELRTPL…SFYVMLPGRP (221 aa). The residue at position 250 (H250) is a Phosphohistidine; by autocatalysis. The disordered stretch occupies residues 468 to 515; that stretch reads LTPGGNGTAPVPAAQFDPDMRSAGSRADRRVIKNTETNGKSRSASKEL.

Mg(2+) is required as a cofactor. The cofactor is Mn(2+). Autophosphorylated.

Its subcellular location is the cell membrane. The catalysed reaction is ATP + protein L-histidine = ADP + protein N-phospho-L-histidine.. Its function is as follows. Member of the two-component regulatory system MprB/MprA which contributes to maintaining a balance among several systems involved in stress resistance and is required for establishment and maintenance of persistent infection in the host. In response to environmental signals MprB acts both as a membrane-associated protein kinase that undergoes autophosphorylation and subsequently transfers the phosphate to MprA, and a protein phosphatase that dephosphorylates phospho-MprA. In Mycobacterium sp. (strain KMS), this protein is Signal transduction histidine-protein kinase/phosphatase MprB (mprB).